The following is a 288-amino-acid chain: dTDP-4-keto-6-deoxy-D-glucose reductase (288 aa).

NADH-binding positions include glycine 12–leucine 14, aspartate 38–isoleucine 39, alanine 62–threonine 64, tyrosine 127, and lysine 131. NADPH contacts are provided by residues methionine 13 to leucine 14, aspartate 38 to isoleucine 39, alanine 62 to threonine 64, tyrosine 127, and lysine 131. The Proton donor/acceptor role is filled by tyrosine 127.

It belongs to the dTDP-4-dehydrorhamnose reductase family. Mg(2+) is required as a cofactor.

It functions in the pathway antibiotic biosynthesis; novobiocin biosynthesis. Reduces the product formed from the reaction of NovW with dTDP-4-keto-6-deoxy-D-glucose to result in dTDP-5-methyl-L-rhamnose in the novobiocin biosynthesis pathway, an aminocoumarin family antibiotic that targets bacterial DNA gyrases. The sequence is that of dTDP-4-keto-6-deoxy-D-glucose reductase (novS) from Streptomyces niveus (Streptomyces spheroides).